The sequence spans 419 residues: Histidine--tRNA ligase (419 aa).

Belongs to the class-II aminoacyl-tRNA synthetase family. Homodimer.

Its subcellular location is the cytoplasm. It catalyses the reaction tRNA(His) + L-histidine + ATP = L-histidyl-tRNA(His) + AMP + diphosphate + H(+). This chain is Histidine--tRNA ligase, found in Methylobacillus flagellatus (strain ATCC 51484 / DSM 6875 / VKM B-1610 / KT).